A 403-amino-acid chain; its full sequence is Poly(rC)-binding protein 4 (403 aa).

KH domains are found at residues 17 to 67, 101 to 154, and 241 to 293; these read TLTL…TITG, PVTL…TVSG, and TSSQ…TITG.

It localises to the cytoplasm. Functionally, single-stranded nucleic acid binding protein that binds preferentially to oligo dC. The protein is Poly(rC)-binding protein 4 (PCBP4) of Bos taurus (Bovine).